We begin with the raw amino-acid sequence, 406 residues long: Protein transport protein HofC homolog (406 aa).

3 helical membrane-spanning segments follow: residues 167–187 (MVLGISLLLTLALLLFIVPQF), 214–234 (QNIGILLFFVLSFFLFYYFYL), and 379–399 (MMVIIGSLIGIIMMGMYLPIF).

Belongs to the GSP F family.

The protein resides in the cell inner membrane. This chain is Protein transport protein HofC homolog (hofC), found in Haemophilus influenzae (strain ATCC 51907 / DSM 11121 / KW20 / Rd).